The chain runs to 124 residues: Large ribosomal subunit protein uL14 (124 aa).

It belongs to the universal ribosomal protein uL14 family. As to quaternary structure, part of the 50S ribosomal subunit. Forms a cluster with proteins L3 and L19. In the 70S ribosome, L14 and L19 interact and together make contacts with the 16S rRNA in bridges B5 and B8.

Binds to 23S rRNA. Forms part of two intersubunit bridges in the 70S ribosome. This chain is Large ribosomal subunit protein uL14, found in Mycoplasmoides gallisepticum (strain R(low / passage 15 / clone 2)) (Mycoplasma gallisepticum).